The chain runs to 313 residues: Probable inactive peptidyl-prolyl cis-trans isomerase-like 6 (313 aa).

The 164-residue stretch at 147–310 (YLDICIDLSP…LLCSIADSGV (164 aa)) folds into the PPIase cyclophilin-type domain.

Belongs to the cyclophilin-type PPIase family.

In terms of biological role, probable inactive PPIase with no peptidyl-prolyl cis-trans isomerase activity. This is Probable inactive peptidyl-prolyl cis-trans isomerase-like 6 from Mus musculus (Mouse).